The primary structure comprises 318 residues: Isoflavone reductase (318 aa).

NADP(+) is bound by residues Gly-11–Gly-17, Arg-36, and Lys-44. The active-site Proton acceptor is Lys-144. Arg-148 serves as a coordination point for NADP(+).

This sequence belongs to the NmrA-type oxidoreductase family. Isoflavone reductase subfamily.

It carries out the reaction (3R)-vestitone + NADP(+) = 2'-hydroxyformononetin + NADPH + 2 H(+). Its pathway is phytoalexin biosynthesis; pterocarpan phytoalexin biosynthesis. Its function is as follows. Reduces achiral isoflavones to chiral isoflavanones during the biosynthesis of chiral pterocarpan phytoalexins. The protein is Isoflavone reductase (IFR) of Cicer arietinum (Chickpea).